The sequence spans 294 residues: Nucleotide-binding protein LVIS_0651 (294 aa).

An ATP-binding site is contributed by 12-19 (GMSGAGKT). 62 to 65 (DLRS) contributes to the GTP binding site.

The protein belongs to the RapZ-like family.

Functionally, displays ATPase and GTPase activities. The polypeptide is Nucleotide-binding protein LVIS_0651 (Levilactobacillus brevis (strain ATCC 367 / BCRC 12310 / CIP 105137 / JCM 1170 / LMG 11437 / NCIMB 947 / NCTC 947) (Lactobacillus brevis)).